The primary structure comprises 375 residues: Chaperone protein DnaJ (375 aa).

The 66-residue stretch at 5–70 (DYYEVLGVER…GKRSAYDQYG (66 aa)) folds into the J domain. The CR-type zinc finger occupies 134–212 (GTTVTIRVPT…CHGQGRVEES (79 aa)). Zn(2+)-binding residues include cysteine 147, cysteine 150, cysteine 164, cysteine 167, cysteine 186, cysteine 189, cysteine 200, and cysteine 203. CXXCXGXG motif repeat units lie at residues 147-154 (CKTCDGTG), 164-171 (CTTCGGIG), 186-193 (CPRCHGSG), and 200-207 (CGSCHGQG).

This sequence belongs to the DnaJ family. In terms of assembly, homodimer. Zn(2+) serves as cofactor.

It localises to the cytoplasm. Its function is as follows. Participates actively in the response to hyperosmotic and heat shock by preventing the aggregation of stress-denatured proteins and by disaggregating proteins, also in an autonomous, DnaK-independent fashion. Unfolded proteins bind initially to DnaJ; upon interaction with the DnaJ-bound protein, DnaK hydrolyzes its bound ATP, resulting in the formation of a stable complex. GrpE releases ADP from DnaK; ATP binding to DnaK triggers the release of the substrate protein, thus completing the reaction cycle. Several rounds of ATP-dependent interactions between DnaJ, DnaK and GrpE are required for fully efficient folding. Also involved, together with DnaK and GrpE, in the DNA replication of plasmids through activation of initiation proteins. This Ectopseudomonas mendocina (strain ymp) (Pseudomonas mendocina) protein is Chaperone protein DnaJ.